Consider the following 573-residue polypeptide: E3 ubiquitin-protein ligase TRIM23 (573 aa).

The RING-type; degenerate zinc finger occupies Cys31–Arg76. The segment at Glu122 to Leu168 adopts a B box-type; degenerate zinc-finger fold. Positions Arg351–Asp378 form a coiled coil. The tract at residues Phe390–Ala573 is ARF-like. Residues Leu411 to Thr418, Val454 to His458, and Lys513 to Val516 each bind GTP.

This sequence in the C-terminal section; belongs to the small GTPase superfamily. Arf family. In terms of assembly, homodimer. Interacts with PSCD1. Interacts with UBE2D2. Interacts with TBK1 (via N-terminal kinase domain) and p62/SQSTM1.

It localises to the cytoplasm. It is found in the endomembrane system. Its subcellular location is the golgi apparatus membrane. The protein resides in the lysosome membrane. It carries out the reaction S-ubiquitinyl-[E2 ubiquitin-conjugating enzyme]-L-cysteine + [acceptor protein]-L-lysine = [E2 ubiquitin-conjugating enzyme]-L-cysteine + N(6)-ubiquitinyl-[acceptor protein]-L-lysine.. The protein operates within protein modification; protein ubiquitination. Its function is as follows. Acts as an E3 ubiquitin-protein ligase. Plays an essential role in autophagy activation during viral infection. Mechanistically, activates TANK-binding kinase 1/TBK1 by facilitating its dimerization and ability to phosphorylate the selective autophagy receptor SQSTM1. In order to achieve this function, TRIM23 mediates 'Lys-27'-linked auto-ubiquitination of its ADP-ribosylation factor (ARF) domain to induce its GTPase activity and its recruitment to autophagosomes. This is E3 ubiquitin-protein ligase TRIM23 (Trim23) from Rattus norvegicus (Rat).